The primary structure comprises 440 residues: Probable aldose 1-epimerase ARB_05372 (440 aa).

The signal sequence occupies residues 1-24 (MCGVLRQLMLLLLAFLSITPSCSA). N-linked (GlcNAc...) asparagine glycans are attached at residues asparagine 32, asparagine 38, asparagine 43, asparagine 68, and asparagine 112. 125–126 (NR) contacts substrate. N-linked (GlcNAc...) asparagine glycosylation is found at asparagine 129, asparagine 147, asparagine 163, asparagine 171, and asparagine 199. The Proton donor role is filled by histidine 233. N-linked (GlcNAc...) asparagine glycosylation is found at asparagine 243, asparagine 275, asparagine 281, and asparagine 306. Residue aspartate 311 coordinates substrate. Residues asparagine 321, asparagine 337, asparagine 365, and asparagine 385 are each glycosylated (N-linked (GlcNAc...) asparagine). The Proton acceptor role is filled by glutamate 401.

Belongs to the aldose epimerase family. As to quaternary structure, monomer.

Its subcellular location is the secreted. It carries out the reaction alpha-D-glucose = beta-D-glucose. The protein operates within carbohydrate metabolism; hexose metabolism. In terms of biological role, mutarotase converts alpha-aldose to the beta-anomer. It is active on D-glucose, L-arabinose, D-xylose, D-galactose, maltose and lactose. The protein is Probable aldose 1-epimerase ARB_05372 of Arthroderma benhamiae (strain ATCC MYA-4681 / CBS 112371) (Trichophyton mentagrophytes).